The following is a 69-amino-acid chain: Ribosome modulation factor (69 aa).

The protein belongs to the ribosome modulation factor family.

The protein localises to the cytoplasm. During stationary phase, converts 70S ribosomes to an inactive dimeric form (100S ribosomes). This chain is Ribosome modulation factor, found in Chromohalobacter salexigens (strain ATCC BAA-138 / DSM 3043 / CIP 106854 / NCIMB 13768 / 1H11).